Reading from the N-terminus, the 180-residue chain is Dual-action ribosomal maturation protein DarP (180 aa).

The protein belongs to the DarP family.

Its subcellular location is the cytoplasm. In terms of biological role, member of a network of 50S ribosomal subunit biogenesis factors which assembles along the 30S-50S interface, preventing incorrect 23S rRNA structures from forming. Promotes peptidyl transferase center (PTC) maturation. In Pasteurella multocida (strain Pm70), this protein is Dual-action ribosomal maturation protein DarP.